The following is a 196-amino-acid chain: MNVVILDTGCANLSSVKSAVARHGYTPVVSREAEIVLRADKLFLPGVGTAQAAMDQLRERELIDLIKACTQPVLGICLGMQLLGRRSEETRGVDLLNIIEQDVPKMTDFGLPLPHMGWNRVYPQAGNRLFQGIEDGAYFYFVHSYAMPVNPWTIAQCNYGEPFTAAVQKDNFFGVQFHPERSGAAGAQLLKNFLEM.

The Glutamine amidotransferase type-1 domain maps to asparagine 2 to methionine 196. Cysteine 77 functions as the Nucleophile in the catalytic mechanism. Residues histidine 178 and glutamate 180 contribute to the active site.

As to quaternary structure, heterodimer of HisH and HisF.

The protein resides in the cytoplasm. It catalyses the reaction 5-[(5-phospho-1-deoxy-D-ribulos-1-ylimino)methylamino]-1-(5-phospho-beta-D-ribosyl)imidazole-4-carboxamide + L-glutamine = D-erythro-1-(imidazol-4-yl)glycerol 3-phosphate + 5-amino-1-(5-phospho-beta-D-ribosyl)imidazole-4-carboxamide + L-glutamate + H(+). The enzyme catalyses L-glutamine + H2O = L-glutamate + NH4(+). Its pathway is amino-acid biosynthesis; L-histidine biosynthesis; L-histidine from 5-phospho-alpha-D-ribose 1-diphosphate: step 5/9. IGPS catalyzes the conversion of PRFAR and glutamine to IGP, AICAR and glutamate. The HisH subunit catalyzes the hydrolysis of glutamine to glutamate and ammonia as part of the synthesis of IGP and AICAR. The resulting ammonia molecule is channeled to the active site of HisF. In Salmonella choleraesuis (strain SC-B67), this protein is Imidazole glycerol phosphate synthase subunit HisH.